An 871-amino-acid polypeptide reads, in one-letter code: Rho guanine nucleotide exchange factor 26 (871 aa).

3 disordered regions span residues Met-1 to Thr-49, Ala-86 to Val-233, and Pro-288 to Arg-310. A Phosphoserine modification is found at Ser-22. The segment covering Pro-136–Cys-156 has biased composition (pro residues). The span at Pro-173–Gly-192 shows a compositional bias: polar residues. At Ser-392 the chain carries Phosphoserine. In terms of domain architecture, DH spans Lys-439–Gly-623. Residues Trp-655–Gly-782 form the PH domain. The SH3 domain maps to Thr-789 to Cys-850.

As to quaternary structure, interacts with ICAM1 and RHOG. As to expression, isoform 1 is broadly expressed, with highest levels in liver (at protein level). Certain mRNA species appear to be specifically expressed in prostate and liver.

It is found in the cell projection. Its subcellular location is the ruffle. Functionally, activates RhoG GTPase by promoting the exchange of GDP by GTP. Required for the formation of membrane ruffles during macropinocytosis. Required for the formation of cup-like structures during trans-endothelial migration of leukocytes. In case of Salmonella enterica infection, activated by SopB, which induces cytoskeleton rearrangements and promotes bacterial entry. This Homo sapiens (Human) protein is Rho guanine nucleotide exchange factor 26 (ARHGEF26).